We begin with the raw amino-acid sequence, 199 residues long: Large ribosomal subunit protein bL25 (199 aa).

Residues 1 to 21 (MNIEKTLSVQKREGYGKGPSG) are disordered.

It belongs to the bacterial ribosomal protein bL25 family. CTC subfamily. As to quaternary structure, part of the 50S ribosomal subunit; part of the 5S rRNA/L5/L18/L25 subcomplex. Contacts the 5S rRNA. Binds to the 5S rRNA independently of L5 and L18.

Its function is as follows. This is one of the proteins that binds to the 5S RNA in the ribosome where it forms part of the central protuberance. This Desulfovibrio desulfuricans (strain ATCC 27774 / DSM 6949 / MB) protein is Large ribosomal subunit protein bL25.